Here is a 297-residue protein sequence, read N- to C-terminus: 4-hydroxy-tetrahydrodipicolinate synthase (297 aa).

Thr47 is a binding site for pyruvate. Tyr136 (proton donor/acceptor) is an active-site residue. Lys165 serves as the catalytic Schiff-base intermediate with substrate. Ile206 contacts pyruvate.

Belongs to the DapA family. As to quaternary structure, homotetramer; dimer of dimers.

It localises to the cytoplasm. It carries out the reaction L-aspartate 4-semialdehyde + pyruvate = (2S,4S)-4-hydroxy-2,3,4,5-tetrahydrodipicolinate + H2O + H(+). The protein operates within amino-acid biosynthesis; L-lysine biosynthesis via DAP pathway; (S)-tetrahydrodipicolinate from L-aspartate: step 3/4. Its function is as follows. Catalyzes the condensation of (S)-aspartate-beta-semialdehyde [(S)-ASA] and pyruvate to 4-hydroxy-tetrahydrodipicolinate (HTPA). The chain is 4-hydroxy-tetrahydrodipicolinate synthase from Campylobacter curvus (strain 525.92).